A 293-amino-acid chain; its full sequence is MAAVQRLLRASASGGAAAAAAAARRRMSTAVAPEQTPAAAAFPFAAAAGRARQRVAEERNVQWVFLGCPGVGKGTYASRLSRLLGVPHIATGDLVRDELASSGPLSVQLAEIVNQGKLVSDEIIINLLSKRLKKGEEQGESGFILDGFPRTVKQAEILDGVTDIDMVVNLKLREDVLVEKCLGRRICGQCGKNFNLACIDVKGENGLPPIYMAPLLPPNNCMSKLITRADDTEEVVRNRLQIYNDMSQPVEGFYRQQGKLLEFDLPGGIPESWPKLLHVLNLEDQEEMKLATA.

The N-terminal 26 residues, 1 to 26 (MAAVQRLLRASASGGAAAAAAAARRR), are a transit peptide targeting the mitochondrion. 70–75 (GVGKGT) is a binding site for ATP. The segment at 90 to 119 (ATGDLVRDELASSGPLSVQLAEIVNQGKLV) is NMP. AMP-binding positions include T91, R96, 117-119 (KLV), 147-150 (GFPR), and Q154. Residues 183–231 (GRRICGQCGKNFNLACIDVKGENGLPPIYMAPLLPPNNCMSKLITRADD) form an LID region. Residues R184 and 193–194 (NF) contribute to the ATP site. Residues R228 and R239 each coordinate AMP.

Belongs to the adenylate kinase family.

The protein resides in the mitochondrion. The enzyme catalyses AMP + ATP = 2 ADP. Functionally, catalyzes the reversible transfer of the terminal phosphate group between ATP and AMP. Plays an important role in cellular energy homeostasis and in adenine nucleotide metabolism. This is Probable adenylate kinase 1, chloroplastic from Oryza sativa subsp. japonica (Rice).